A 72-amino-acid polypeptide reads, in one-letter code: Putative sodium channel toxin Ts18 (72 aa).

The signal sequence occupies residues 1-21; it reads MNFRFPFLLMITISLIGAVLT. 3 disulfide bridges follow: Cys-38–Cys-61, Cys-47–Cys-66, and Cys-51–Cys-68.

The protein belongs to the long (3 C-C) scorpion toxin superfamily. As to expression, expressed by the venom gland.

The protein localises to the secreted. Functionally, binds to sodium channels (Nav) and affects the channel activation process. The chain is Putative sodium channel toxin Ts18 from Tityus serrulatus (Brazilian scorpion).